The chain runs to 279 residues: Thymidylate synthase (279 aa).

Residue 133 to 134 (RR) participates in dUMP binding. Cys154 (nucleophile) is an active-site residue. DUMP contacts are provided by residues 178–181 (RSND), Asn189, and 219–221 (HIY). Residue Asp181 coordinates (6R)-5,10-methylene-5,6,7,8-tetrahydrofolate. Position 278 (Ala278) interacts with (6R)-5,10-methylene-5,6,7,8-tetrahydrofolate.

This sequence belongs to the thymidylate synthase family. Bacterial-type ThyA subfamily. Homodimer.

It is found in the cytoplasm. The catalysed reaction is dUMP + (6R)-5,10-methylene-5,6,7,8-tetrahydrofolate = 7,8-dihydrofolate + dTMP. The protein operates within pyrimidine metabolism; dTTP biosynthesis. Its function is as follows. Catalyzes the reductive methylation of 2'-deoxyuridine-5'-monophosphate (dUMP) to 2'-deoxythymidine-5'-monophosphate (dTMP) while utilizing 5,10-methylenetetrahydrofolate (mTHF) as the methyl donor and reductant in the reaction, yielding dihydrofolate (DHF) as a by-product. This enzymatic reaction provides an intracellular de novo source of dTMP, an essential precursor for DNA biosynthesis. The protein is Thymidylate synthase of Streptococcus suis (strain 05ZYH33).